A 56-amino-acid chain; its full sequence is Large ribosomal subunit protein bL33 (56 aa).

Basic and acidic residues predominate over residues 1–12; the sequence is MASKGGRDKIKL. Positions 1–28 are disordered; that stretch reads MASKGGRDKIKLESTAGTGHFYTTTKNK. A compositionally biased stretch (polar residues) spans 15–25; it reads TAGTGHFYTTT.

This sequence belongs to the bacterial ribosomal protein bL33 family.

This Cupriavidus necator (strain ATCC 17699 / DSM 428 / KCTC 22496 / NCIMB 10442 / H16 / Stanier 337) (Ralstonia eutropha) protein is Large ribosomal subunit protein bL33.